A 273-amino-acid chain; its full sequence is 3-methyl-2-oxobutanoate hydroxymethyltransferase (273 aa).

Residues Asp49 and Asp88 each contribute to the Mg(2+) site. 3-methyl-2-oxobutanoate is bound by residues 49–50 (DS), Asp88, and Lys118. Residue Glu120 coordinates Mg(2+). The active-site Proton acceptor is the Glu187.

Belongs to the PanB family. Homodecamer; pentamer of dimers. Mg(2+) serves as cofactor.

The protein resides in the cytoplasm. The catalysed reaction is 3-methyl-2-oxobutanoate + (6R)-5,10-methylene-5,6,7,8-tetrahydrofolate + H2O = 2-dehydropantoate + (6S)-5,6,7,8-tetrahydrofolate. It participates in cofactor biosynthesis; (R)-pantothenate biosynthesis; (R)-pantoate from 3-methyl-2-oxobutanoate: step 1/2. Functionally, catalyzes the reversible reaction in which hydroxymethyl group from 5,10-methylenetetrahydrofolate is transferred onto alpha-ketoisovalerate to form ketopantoate. The chain is 3-methyl-2-oxobutanoate hydroxymethyltransferase from Sinorhizobium medicae (strain WSM419) (Ensifer medicae).